Reading from the N-terminus, the 392-residue chain is Phosphoglycerate kinase (392 aa).

Substrate is bound by residues 21-23 (DFN), R36, 59-62 (HLGR), R113, and R146. Residues K197, E319, and 345–348 (GGDT) contribute to the ATP site.

Belongs to the phosphoglycerate kinase family. As to quaternary structure, monomer.

Its subcellular location is the cytoplasm. The catalysed reaction is (2R)-3-phosphoglycerate + ATP = (2R)-3-phospho-glyceroyl phosphate + ADP. The protein operates within carbohydrate degradation; glycolysis; pyruvate from D-glyceraldehyde 3-phosphate: step 2/5. The polypeptide is Phosphoglycerate kinase (Francisella philomiragia subsp. philomiragia (strain ATCC 25017 / CCUG 19701 / FSC 153 / O#319-036)).